Here is a 72-residue protein sequence, read N- to C-terminus: Translation initiation factor IF-1 (72 aa).

The region spanning Met-1–Lys-72 is the S1-like domain.

This sequence belongs to the IF-1 family. Component of the 30S ribosomal translation pre-initiation complex which assembles on the 30S ribosome in the order IF-2 and IF-3, IF-1 and N-formylmethionyl-tRNA(fMet); mRNA recruitment can occur at any time during PIC assembly.

It is found in the cytoplasm. Functionally, one of the essential components for the initiation of protein synthesis. Stabilizes the binding of IF-2 and IF-3 on the 30S subunit to which N-formylmethionyl-tRNA(fMet) subsequently binds. Helps modulate mRNA selection, yielding the 30S pre-initiation complex (PIC). Upon addition of the 50S ribosomal subunit IF-1, IF-2 and IF-3 are released leaving the mature 70S translation initiation complex. The protein is Translation initiation factor IF-1 of Chlorobium phaeovibrioides (strain DSM 265 / 1930) (Prosthecochloris vibrioformis (strain DSM 265)).